The following is a 303-amino-acid chain: RELT-like protein 2 (303 aa).

The helical transmembrane segment at 15 to 35 threads the bilayer; that stretch reads LYMLFLLVLVFFLMGLVGFMI. 2 disordered regions span residues 46 to 67 and 132 to 303; these read CRTSRGSEPDDAQLQPPEDDDM and CLHC…AGSM. Ser-52 is subject to Phosphoserine. Composition is skewed to basic and acidic residues over residues 148 to 158 and 172 to 188; these read RSKEGKSRPRT and THIEKRYGLHEHRDGSP. The span at 194–212 shows a compositional bias: gly residues; the sequence is GSGGGQDPGGGQGSGGGQP. The span at 278–296 shows a compositional bias: polar residues; that stretch reads QEANGQPSKPDTSDHQVSL.

This sequence belongs to the RELT family. As to quaternary structure, interacts with RELT, RELL1 and OXSR1. Interacts with PLSCR1. Interacts with TRAF2. Post-translationally, phosphorylated in vitro by OXSR1. As to expression, primarily expressed in spleen, thymus, testis, peripheral blood leukocytes, brain and placenta. Not detected in prostate, ovary, small intestine, colon, heart, lung, liver, skeletal muscle, kidney and pancreas.

It is found in the cell membrane. Functionally, induces activation of MAPK14/p38 cascade, when overexpressed. Induces apoptosis, when overexpressed. The polypeptide is RELT-like protein 2 (RELL2) (Homo sapiens (Human)).